We begin with the raw amino-acid sequence, 259 residues long: Deoxyribose-phosphate aldolase (259 aa).

D104 (proton donor/acceptor) is an active-site residue. The Schiff-base intermediate with acetaldehyde role is filled by K168. K200 (proton donor/acceptor) is an active-site residue.

The protein belongs to the DeoC/FbaB aldolase family. DeoC type 2 subfamily.

The protein resides in the cytoplasm. It carries out the reaction 2-deoxy-D-ribose 5-phosphate = D-glyceraldehyde 3-phosphate + acetaldehyde. It functions in the pathway carbohydrate degradation; 2-deoxy-D-ribose 1-phosphate degradation; D-glyceraldehyde 3-phosphate and acetaldehyde from 2-deoxy-alpha-D-ribose 1-phosphate: step 2/2. Catalyzes a reversible aldol reaction between acetaldehyde and D-glyceraldehyde 3-phosphate to generate 2-deoxy-D-ribose 5-phosphate. The chain is Deoxyribose-phosphate aldolase from Agrobacterium fabrum (strain C58 / ATCC 33970) (Agrobacterium tumefaciens (strain C58)).